The sequence spans 318 residues: Pyrimidine-specific ribonucleoside hydrolase RihA (318 aa).

H240 is an active-site residue.

This sequence belongs to the IUNH family. RihA subfamily.

Hydrolyzes cytidine or uridine to ribose and cytosine or uracil, respectively. The protein is Pyrimidine-specific ribonucleoside hydrolase RihA of Shewanella baltica (strain OS185).